A 164-amino-acid chain; its full sequence is Ribosome maturation factor RimM (164 aa).

Positions 93-164 (DSEYYVANLN…FVVIVPPEFI (72 aa)) constitute a PRC barrel domain.

This sequence belongs to the RimM family. In terms of assembly, binds ribosomal protein uS19.

The protein resides in the cytoplasm. Functionally, an accessory protein needed during the final step in the assembly of 30S ribosomal subunit, possibly for assembly of the head region. Essential for efficient processing of 16S rRNA. May be needed both before and after RbfA during the maturation of 16S rRNA. It has affinity for free ribosomal 30S subunits but not for 70S ribosomes. The protein is Ribosome maturation factor RimM of Orientia tsutsugamushi (strain Boryong) (Rickettsia tsutsugamushi).